The primary structure comprises 281 residues: MQKKYYELFFIVEEQYKNLFLDFAFDLGIEAIEEKDNGVYIRSHESLEEFSWALEIFAQKLTTTFNLNHKIISNLSLVEKENKDWIQEYKKGIKPILVDNVYIHTTWQEEKKNCINIKINPALAFGSGHHESTYSCVKFLQKFSKSKLRALDLGCGSGILGIIMAKFGCNVEICDTDELAIDSSLENARLNGVDFHKAWCGSIDKANGLYNLIVANIIADVILILEKDIKNHLEDNAILILSGILDKYSTRIKEKFQDLELIDEMQINEWCSFVYKNNKKG.

Thr-133, Gly-154, Asp-175, and Asn-216 together coordinate S-adenosyl-L-methionine.

It belongs to the methyltransferase superfamily. PrmA family.

It is found in the cytoplasm. It carries out the reaction L-lysyl-[protein] + 3 S-adenosyl-L-methionine = N(6),N(6),N(6)-trimethyl-L-lysyl-[protein] + 3 S-adenosyl-L-homocysteine + 3 H(+). Functionally, methylates ribosomal protein L11. This chain is Ribosomal protein L11 methyltransferase, found in Campylobacter jejuni subsp. jejuni serotype O:2 (strain ATCC 700819 / NCTC 11168).